Here is a 1286-residue protein sequence, read N- to C-terminus: CLIP-associating protein 2 (1286 aa).

A golgi localization region spans residues 1–40; sequence MRRLICKRICDYKSFDDEESVDGNRPSSAASAFKVPAPKT. A phosphoserine mark is found at S14 and S20. A disordered region spans residues 17-67; it reads DEESVDGNRPSSAASAFKVPAPKTPGNPVSSARKPGSAGGPKVGGPSKEGG. The span at 53–67 shows a compositional bias: gly residues; sequence SAGGPKVGGPSKEGG. Residues 66–317 are TOG 1; sequence GGAGAVDEDD…KSLQTYLKSS (252 aa). HEAT repeat units follow at residues 179–214, 215–251, and 256–293; these read HGAE…IRHT, HVPR…EWQT, and RHAA…HFPG. Residues 320–374 are disordered; that stretch reads VASLPQSDRSSSSSQESLNRPFSSKWSTANPSTVAGRVSVGGSKANPLPGSLQRS. Residues S322, S333, and S336 each carry the phosphoserine modification. Positions 322–340 are enriched in low complexity; it reads SLPQSDRSSSSSQESLNRP. Over residues 341–352 the composition is skewed to polar residues; it reads FSSKWSTANPST. Phosphoserine is present on residues S374, S376, and S413. Residues 411 to 473 form a disordered region; the sequence is YASLEDTSDK…GSRSGSPGRV (63 aa). A compositionally biased stretch (basic and acidic residues) spans 417 to 431; sequence TSDKMDGTASDDGRV. The interaction with microtubules, MAPRE1 and MAPRE3 stretch occupies residues 450–565; the sequence is RGRSRTKMVS…GPGYGISQSS (116 aa). Residues 459–473 are compositionally biased toward low complexity; the sequence is SQSQPGSRSGSPGRV. S461, S465, S469, S484, and S495 each carry phosphoserine. Residues 493–564 form a disordered region; the sequence is SASAQKRSKI…LGPGYGISQS (72 aa). The SXIP motif 1; mediates interaction with MAPRE1 and targeting to microtubule plus ends motif lies at 500–503; sequence SKIP. Position 513 is a phosphoserine (S513). The SXIP motif 2; mediates interaction with MAPRE1 and targeting to microtubule plus ends motif lies at 523–526; the sequence is SRIP. Phosphoserine is present on residues S531, S535, S570, S572, S581, S614, and S620. Positions 605–616 are enriched in basic and acidic residues; the sequence is RRYESYGMHSDD. The disordered stretch occupies residues 605 to 638; it reads RRYESYGMHSDDDANSDASSACSERSYSSRNGSI. Residues 620 to 634 are compositionally biased toward low complexity; the sequence is SDASSACSERSYSSR. The interval 642–873 is TOG 2; that stretch reads MRQTEDVAEV…TKLLHNHLRN (232 aa). HEAT repeat units follow at residues 702 to 739 and 764 to 801; these read KVFS…KMGA and LQFN…QMDP. T779 bears the Phosphothreonine mark. The tract at residues 864–1286 is interaction with RSN and localization to the Golgi and kinetochores; it reads TKLLHNHLRN…DPTADVSGQS (423 aa). 2 disordered regions span residues 870-920 and 944-989; these read HLRN…FDYD and SFRS…SQPA. Composition is skewed to polar residues over residues 872 to 884 and 893 to 914; these read RNTG…SMGS and SPAN…TLSP. Phosphoserine is present on S884. Phosphoserine is present on residues S944, S947, S1005, and S1021. The span at 947–964 shows a compositional bias: basic and acidic residues; it reads SQEDMSEPVRRDPKKEDG. Positions 1009–1286 are required for cortical localization; the sequence is RDYNPYNYSD…DPTADVSGQS (278 aa). HEAT repeat units follow at residues 1046 to 1083, 1090 to 1127, and 1208 to 1245; these read LDHS…TQEE, EHFK…HQPA, and MLLP…VIGD.

The protein belongs to the CLASP family. Interacts with microtubules. Interacts with MAPRE1; probably required for targeting to growing microtubule plus ends. Interacts with ERC1, MAPRE3 and PHLDB2. The interaction with ERC1 may be mediated by PHLDB2. Interacts with GCC2; recruits CLASP2 to Golgi membranes. Interacts with CLIP2 and RSN. Interacts with MACF1. Interacts with mtcl2. Interacts with MTCL1. Post-translationally, phosphorylated by GSK3B. Phosphorylation by GSK3B may negatively regulate binding to microtubule lattices in lamella. Isoform 2 is phosphorylated on Ser-241. Highly expressed in brain and at low levels in heart, kidney and lung.

It is found in the cytoplasm. The protein localises to the cytoskeleton. The protein resides in the microtubule organizing center. Its subcellular location is the centrosome. It localises to the chromosome. It is found in the centromere. The protein localises to the kinetochore. The protein resides in the spindle. Its subcellular location is the spindle pole. It localises to the golgi apparatus. It is found in the trans-Golgi network. The protein localises to the cell membrane. The protein resides in the cell projection. Its subcellular location is the ruffle membrane. It localises to the cell cortex. Microtubule plus-end tracking protein that promotes the stabilization of dynamic microtubules. Involved in the nucleation of noncentrosomal microtubules originating from the trans-Golgi network (TGN). Required for the polarization of the cytoplasmic microtubule arrays in migrating cells towards the leading edge of the cell. May act at the cell cortex to enhance the frequency of rescue of depolymerizing microtubules by attaching their plus-ends to cortical platforms composed of ERC1 and PHLDB2. This cortical microtubule stabilizing activity is regulated at least in part by phosphatidylinositol 3-kinase signaling. Also performs a similar stabilizing function at the kinetochore which is essential for the bipolar alignment of chromosomes on the mitotic spindle. Acts as a mediator of ERBB2-dependent stabilization of microtubules at the cell cortex. The chain is CLIP-associating protein 2 (Clasp2) from Mus musculus (Mouse).